We begin with the raw amino-acid sequence, 246 residues long: Ribonuclease PH (246 aa).

Phosphate is bound by residues Arg91 and 129–131 (GTR).

This sequence belongs to the RNase PH family. Homohexameric ring arranged as a trimer of dimers.

It catalyses the reaction tRNA(n+1) + phosphate = tRNA(n) + a ribonucleoside 5'-diphosphate. In terms of biological role, phosphorolytic 3'-5' exoribonuclease that plays an important role in tRNA 3'-end maturation. Removes nucleotide residues following the 3'-CCA terminus of tRNAs; can also add nucleotides to the ends of RNA molecules by using nucleoside diphosphates as substrates, but this may not be physiologically important. Probably plays a role in initiation of 16S rRNA degradation (leading to ribosome degradation) during starvation. The chain is Ribonuclease PH from Burkholderia ambifaria (strain ATCC BAA-244 / DSM 16087 / CCUG 44356 / LMG 19182 / AMMD) (Burkholderia cepacia (strain AMMD)).